A 507-amino-acid chain; its full sequence is Histidine ammonia-lyase (507 aa).

Positions 142–144 (ASG) form a cross-link, 5-imidazolinone (Ala-Gly). Residue S143 is modified to 2,3-didehydroalanine (Ser).

This sequence belongs to the PAL/histidase family. In terms of processing, contains an active site 4-methylidene-imidazol-5-one (MIO), which is formed autocatalytically by cyclization and dehydration of residues Ala-Ser-Gly.

It is found in the cytoplasm. The enzyme catalyses L-histidine = trans-urocanate + NH4(+). Its pathway is amino-acid degradation; L-histidine degradation into L-glutamate; N-formimidoyl-L-glutamate from L-histidine: step 1/3. The chain is Histidine ammonia-lyase from Symbiobacterium thermophilum (strain DSM 24528 / JCM 14929 / IAM 14863 / T).